The sequence spans 562 residues: Dihydroxy-acid dehydratase (562 aa).

A Mg(2+)-binding site is contributed by aspartate 80. Position 121 (cysteine 121) interacts with [2Fe-2S] cluster. Mg(2+) is bound by residues aspartate 122 and lysine 123. Residue lysine 123 is modified to N6-carboxylysine. A [2Fe-2S] cluster-binding site is contributed by cysteine 194. Glutamate 446 contacts Mg(2+). Catalysis depends on serine 472, which acts as the Proton acceptor.

Belongs to the IlvD/Edd family. As to quaternary structure, homodimer. [2Fe-2S] cluster is required as a cofactor. Requires Mg(2+) as cofactor.

The enzyme catalyses (2R)-2,3-dihydroxy-3-methylbutanoate = 3-methyl-2-oxobutanoate + H2O. The catalysed reaction is (2R,3R)-2,3-dihydroxy-3-methylpentanoate = (S)-3-methyl-2-oxopentanoate + H2O. It functions in the pathway amino-acid biosynthesis; L-isoleucine biosynthesis; L-isoleucine from 2-oxobutanoate: step 3/4. Its pathway is amino-acid biosynthesis; L-valine biosynthesis; L-valine from pyruvate: step 3/4. Functionally, functions in the biosynthesis of branched-chain amino acids. Catalyzes the dehydration of (2R,3R)-2,3-dihydroxy-3-methylpentanoate (2,3-dihydroxy-3-methylvalerate) into 2-oxo-3-methylpentanoate (2-oxo-3-methylvalerate) and of (2R)-2,3-dihydroxy-3-methylbutanoate (2,3-dihydroxyisovalerate) into 2-oxo-3-methylbutanoate (2-oxoisovalerate), the penultimate precursor to L-isoleucine and L-valine, respectively. The protein is Dihydroxy-acid dehydratase of Staphylococcus aureus (strain COL).